We begin with the raw amino-acid sequence, 222 residues long: UPF0173 metal-dependent hydrolase Mboo_0816 (222 aa).

It belongs to the UPF0173 family.

This chain is UPF0173 metal-dependent hydrolase Mboo_0816, found in Methanoregula boonei (strain DSM 21154 / JCM 14090 / 6A8).